A 355-amino-acid polypeptide reads, in one-letter code: tRNA pseudouridine synthase D (355 aa).

The active-site Nucleophile is aspartate 84. The 147-residue stretch at 160–306 folds into the TRUD domain; the sequence is GVPNYFGLQR…MAHERRILRL (147 aa).

It belongs to the pseudouridine synthase TruD family.

The catalysed reaction is uridine(13) in tRNA = pseudouridine(13) in tRNA. Responsible for synthesis of pseudouridine from uracil-13 in transfer RNAs. This Pseudomonas aeruginosa (strain LESB58) protein is tRNA pseudouridine synthase D.